The following is a 210-amino-acid chain: Ribulose-phosphate 3-epimerase (210 aa).

Serine 9 provides a ligand contact to substrate. Histidine 34, aspartate 36, and histidine 68 together coordinate a divalent metal cation. The active-site Proton acceptor is aspartate 36. Substrate contacts are provided by residues histidine 68, 144–147 (GFGG), 177–179 (DGG), and 199–200 (GS). Aspartate 177 provides a ligand contact to a divalent metal cation. Catalysis depends on aspartate 177, which acts as the Proton donor.

It belongs to the ribulose-phosphate 3-epimerase family. A divalent metal cation serves as cofactor.

The enzyme catalyses D-ribulose 5-phosphate = D-xylulose 5-phosphate. The protein operates within carbohydrate degradation. Functionally, catalyzes the reversible epimerization of D-ribulose 5-phosphate to D-xylulose 5-phosphate. The polypeptide is Ribulose-phosphate 3-epimerase (Serratia marcescens).